The following is a 553-amino-acid chain: Arginine--tRNA ligase (553 aa).

A 'HIGH' region motif is present at residues 130-140 (ANPTGDLHIGH).

This sequence belongs to the class-I aminoacyl-tRNA synthetase family. In terms of assembly, monomer.

It is found in the cytoplasm. The enzyme catalyses tRNA(Arg) + L-arginine + ATP = L-arginyl-tRNA(Arg) + AMP + diphosphate. This chain is Arginine--tRNA ligase, found in Staphylococcus aureus (strain bovine RF122 / ET3-1).